Here is a 96-residue protein sequence, read N- to C-terminus: Putative pterin-4-alpha-carbinolamine dehydratase (96 aa).

It belongs to the pterin-4-alpha-carbinolamine dehydratase family.

It catalyses the reaction (4aS,6R)-4a-hydroxy-L-erythro-5,6,7,8-tetrahydrobiopterin = (6R)-L-erythro-6,7-dihydrobiopterin + H2O. In Brucella anthropi (strain ATCC 49188 / DSM 6882 / CCUG 24695 / JCM 21032 / LMG 3331 / NBRC 15819 / NCTC 12168 / Alc 37) (Ochrobactrum anthropi), this protein is Putative pterin-4-alpha-carbinolamine dehydratase.